We begin with the raw amino-acid sequence, 186 residues long: MSEIIHVINPMSKWPLASQFGFNLDILETNLINLGVVIGTLLYFGNEVISNLLNKRKEIILNSIRDAEQRYEDATEKLKQANRDLEKAKFKANEIRIQGSTQIEIEKKELIYAADRDSKHLEESKNIAIHLEEQRILEEVRREVSGLAFQKTLIILNNRLTSQLQVEMIDYKIDLFFNNFQVSTNL.

Residues 26 to 44 traverse the membrane as a helical segment; sequence ILETNLINLGVVIGTLLYF.

It belongs to the ATPase B chain family. As to quaternary structure, F-type ATPases have 2 components, F(1) - the catalytic core - and F(0) - the membrane proton channel. F(1) has five subunits: alpha(3), beta(3), gamma(1), delta(1), epsilon(1). F(0) has four main subunits: a(1), b(1), b'(1) and c(10-14). The alpha and beta chains form an alternating ring which encloses part of the gamma chain. F(1) is attached to F(0) by a central stalk formed by the gamma and epsilon chains, while a peripheral stalk is formed by the delta, b and b' chains.

It is found in the plastid. The protein resides in the chloroplast thylakoid membrane. Functionally, f(1)F(0) ATP synthase produces ATP from ADP in the presence of a proton or sodium gradient. F-type ATPases consist of two structural domains, F(1) containing the extramembraneous catalytic core and F(0) containing the membrane proton channel, linked together by a central stalk and a peripheral stalk. During catalysis, ATP synthesis in the catalytic domain of F(1) is coupled via a rotary mechanism of the central stalk subunits to proton translocation. Its function is as follows. Component of the F(0) channel, it forms part of the peripheral stalk, linking F(1) to F(0). This is ATP synthase subunit b, chloroplastic from Chara vulgaris (Common stonewort).